The following is a 277-amino-acid chain: Caspase-3 (277 aa).

Position 1 is an N-acetylmethionine (Met1). 2 propeptides span residues 1–9 and 10–28; these read MENNKTSVD and SKSI…KSVD. Residue Lys11 is modified to N6-acetyllysine. Ser26 is modified (phosphoserine). Active-site residues include His121 and Cys163. Cys163 is subject to S-nitrosocysteine; in inhibited form.

This sequence belongs to the peptidase C14A family. As to quaternary structure, heterotetramer that consists of two anti-parallel arranged heterodimers, each one formed by a 17 kDa (p17) and a 12 kDa (p12) subunit. Interacts with BIRC6/bruce. Post-translationally, cleavage by granzyme B, caspase-6, caspase-8 and caspase-10 generates the two active subunits. Additional processing of the propeptides is likely due to the autocatalytic activity of the activated protease. Active heterodimers between the small subunit of caspase-7 protease and the large subunit of caspase-3 also occur and vice versa. S-nitrosylated on its catalytic site cysteine in unstimulated cell lines and denitrosylated upon activation of the Fas apoptotic pathway, associated with an increase in intracellular caspase activity. Fas therefore activates caspase-3 not only by inducing the cleavage of the caspase zymogen to its active subunits, but also by stimulating the denitrosylation of its active site thiol. In terms of processing, ubiquitinated by BIRC6; this activity is inhibited by DIABLO/SMAC. As to expression, highest expression in spleen, lung, liver, kidney and heart. Lower expression in brain, skeletal muscle and testis.

It is found in the cytoplasm. It carries out the reaction Strict requirement for an Asp residue at positions P1 and P4. It has a preferred cleavage sequence of Asp-Xaa-Xaa-Asp-|- with a hydrophobic amino-acid residue at P2 and a hydrophilic amino-acid residue at P3, although Val or Ala are also accepted at this position.. With respect to regulation, inhibited by BIRC6; following inhibition of BIRC6-caspase binding by DIABLO/SMAC, BIRC6 is subjected to caspase cleavage, leading to an increase in active caspases. Its function is as follows. Thiol protease that acts as a major effector caspase involved in the execution phase of apoptosis. Following cleavage and activation by initiator caspases (CASP8, CASP9 and/or CASP10), mediates execution of apoptosis by catalyzing cleavage of many proteins. At the onset of apoptosis, it proteolytically cleaves poly(ADP-ribose) polymerase PARP1 at a '216-Asp-|-Gly-217' bond. Cleaves and activates sterol regulatory element binding proteins (SREBPs) between the basic helix-loop-helix leucine zipper domain and the membrane attachment domain. Cleaves and activates caspase-6, -7 and -9 (CASP6, CASP7 and CASP9, respectively). Cleaves and inactivates interleukin-18 (IL18). Triggers cell adhesion in sympathetic neurons through RET cleavage. Cleaves IL-1 beta between an Asp and an Ala, releasing the mature cytokine which is involved in a variety of inflammatory processes. Cleaves and inhibits serine/threonine-protein kinase AKT1 in response to oxidative stress. Acts as an inhibitor of type I interferon production during virus-induced apoptosis by mediating cleavage of antiviral proteins CGAS, IRF3 and MAVS, thereby preventing cytokine overproduction. Also involved in pyroptosis by mediating cleavage and activation of gasdermin-E (GSDME). Cleaves XRCC4 and phospholipid scramblase proteins XKR4, XKR8 and XKR9, leading to promote phosphatidylserine exposure on apoptotic cell surface. Cleaves BIRC6 following inhibition of BIRC6-caspase binding by DIABLO/SMAC. The polypeptide is Caspase-3 (Casp3) (Mus musculus (Mouse)).